The sequence spans 99 residues: Cell division protein FtsB (99 aa).

Topologically, residues 1–3 (MRV) are cytoplasmic. The chain crosses the membrane as a helical span at residues 4–21 (FTAILLILLVLLQYRLWF). Topologically, residues 22 to 99 (GKNSVPDYLV…KENSTRNVNN (78 aa)) are periplasmic. Residues 29–53 (YLVLKENVVRQQSANEKLQQRNKLL) are a coiled coil.

The protein belongs to the FtsB family. Part of a complex composed of FtsB, FtsL and FtsQ.

The protein resides in the cell inner membrane. Essential cell division protein. May link together the upstream cell division proteins, which are predominantly cytoplasmic, with the downstream cell division proteins, which are predominantly periplasmic. The sequence is that of Cell division protein FtsB from Colwellia psychrerythraea (strain 34H / ATCC BAA-681) (Vibrio psychroerythus).